Reading from the N-terminus, the 264-residue chain is Glutamate racemase 2 (264 aa).

Substrate contacts are provided by residues 10 to 11 and 42 to 43; these read DS and YG. The active-site Proton donor/acceptor is Cys-73. 74–75 lines the substrate pocket; sequence NT. Catalysis depends on Cys-181, which acts as the Proton donor/acceptor. 182-183 serves as a coordination point for substrate; sequence TH.

Belongs to the aspartate/glutamate racemases family.

The enzyme catalyses L-glutamate = D-glutamate. It participates in cell wall biogenesis; peptidoglycan biosynthesis. Its function is as follows. Provides the (R)-glutamate required for cell wall biosynthesis. The polypeptide is Glutamate racemase 2 (Caldanaerobacter subterraneus subsp. tengcongensis (strain DSM 15242 / JCM 11007 / NBRC 100824 / MB4) (Thermoanaerobacter tengcongensis)).